Consider the following 247-residue polypeptide: Peroxisomal membrane protein 11A (247 aa).

The Cytoplasmic segment spans residues 1–83; that stretch reads MDAFIRFTNQ…SVRATDLVPR (83 aa). The chain crosses the membrane as a helical span at residues 84 to 105; the sequence is ICLTLASLNRVIYFICDTVLFV. Over 106–219 the chain is Lumenal; it reads RSTGLASGVN…DQLGIYKSNP (114 aa). A helical transmembrane segment spans residues 220–239; it reads GIIGLGGLVSSVAGIITVAY. Residues 220-239 form a required for homodimerization, interaction with PEX11G, and peroxisomal localization region; it reads GIIGLGGLVSSVAGIITVAY. Residues 240-247 are Cytoplasmic-facing; sequence PQMKLKTQ.

The protein belongs to the peroxin-11 family. Homodimer. Heterodimer with PEX11G. Probably interacts with COPB2 and COPA. Interacts with PEX19. Interacts with FIS1.

The protein resides in the peroxisome membrane. May be involved in peroxisomal proliferation and may regulate peroxisomes division. May mediate binding of coatomer proteins to the peroxisomal membrane. Promotes membrane protrusion and elongation on the peroxisomal surface. In Bos taurus (Bovine), this protein is Peroxisomal membrane protein 11A (PEX11A).